The following is a 454-amino-acid chain: Anthocyanidin 3-O-galactosyltransferase 3GT6 (454 aa).

An N-terminal signal peptide occupies residues 1 to 21 (MTNSSKGRHVAVLPFPFSTHA). An anthocyanidin contacts are provided by Ser-18 and His-20. His-20 (proton acceptor) is an active-site residue. The Charge relay role is filled by Asp-117. An an anthocyanidin-binding site is contributed by His-148. Ala-331, Gln-333, His-348, Trp-351, Asn-352, Ser-353, and Glu-356 together coordinate UDP-alpha-D-glucose. Residue Gly-371 coordinates an anthocyanidin. Asp-372 lines the UDP-alpha-D-glucose pocket. An N-linked (GlcNAc...) asparagine glycan is attached at Asn-441.

This sequence belongs to the UDP-glycosyltransferase family. As to quaternary structure, monomer. Mostly expressed in leaves and flowers and, to a lower extent, in roots. In flowers, mainly observed in petals, stamens and scapes, and at lower levels in pistils and toruses.

It catalyses the reaction cyanidin + UDP-alpha-D-galactose = cyanidin 3-O-beta-D-galactoside + UDP + H(+). The catalysed reaction is cyanidin + UDP-alpha-D-glucose = cyanidin 3-O-beta-D-glucoside + UDP + H(+). It carries out the reaction delphinidin + UDP-alpha-D-glucose = delphinidin 3-O-beta-D-glucoside + UDP. The enzyme catalyses peonidin + UDP-alpha-D-glucose = peonidin 3-O-beta-D-glucoside + UDP. It catalyses the reaction pelargonidin + UDP-alpha-D-glucose = pelargonidin 3-O-beta-D-glucoside + UDP. The catalysed reaction is delphinidin + UDP-alpha-D-galactose = delphinidin 3-O-beta-D-galactoside + UDP + H(+). It carries out the reaction pelargonidin + UDP-alpha-D-galactose = pelargonidin 3-O-beta-D-galactoside betaine + UDP. The enzyme catalyses peonidin + UDP-alpha-D-galactose = peonidin 3-O-beta-D-galactoside + UDP. It catalyses the reaction petunidin + UDP-alpha-D-galactose = petunidin 3-O-beta-D-galactoside + UDP. The catalysed reaction is petunidin + UDP-alpha-D-glucose = petunidin 3-O-beta-D-glucoside + UDP. It carries out the reaction an anthocyanidin + UDP-alpha-D-glucose + H(+) = an anthocyanidin 3-O-beta-D-glucoside + UDP. The enzyme catalyses an anthocyanidin + UDP-alpha-D-galactose = an anthocyanidin 3-O-beta-D-galactoside + UDP. It functions in the pathway pigment biosynthesis; anthocyanin biosynthesis. Its function is as follows. Flavonoid 3-O-glycosyltransferase involved in the biosynthesis of anthocyanins conferring flower red/pink colors, mainly anthocyanidin 3-O-glycosides. Catalyzes the addition of UDP-sugar to the 3-OH of anthocyanidin, with a preference for UDP-galactose (UDP-Gal) as sugar donor and cyanidin as substrate; able to use delphinidin, pelargonidin, peonidin and petunidin as substrates in the presence of UDP-Gal, but barely active on malvidin. Can also use UDP-glucose (UDP-Glu) as sugar donor with cyanidin, delphinidin, pelargonidin, peonidin and petunidin as substrates, but not active on malvidin. The polypeptide is Anthocyanidin 3-O-galactosyltransferase 3GT6 (Rhododendron delavayi (Rhododendron)).